Reading from the N-terminus, the 134-residue chain is MTIIRKKHPLIKIINHSFIDLPTPSNISSWWNFGSLLGLCLAVQILTGLFLAMHYTSDTATAFSSVAHICRDVNYGWLIRYMHANGASMFFICLFLHVGRGVYYGSYNMIETWNMGIILLFAVMATAFMGYVLP.

3 helical membrane passes run 33–53 (FGSLLGLCLAVQILTGLFLAM), 77–98 (WLIRYMHANGASMFFICLFLHV), and 113–133 (WNMGIILLFAVMATAFMGYVL). Heme b is bound by residues His83 and His97.

The protein belongs to the cytochrome b family. The cytochrome bc1 complex contains 11 subunits: 3 respiratory subunits (MT-CYB, CYC1 and UQCRFS1), 2 core proteins (UQCRC1 and UQCRC2) and 6 low-molecular weight proteins (UQCRH/QCR6, UQCRB/QCR7, UQCRQ/QCR8, UQCR10/QCR9, UQCR11/QCR10 and a cleavage product of UQCRFS1). This cytochrome bc1 complex then forms a dimer. It depends on heme b as a cofactor.

The protein resides in the mitochondrion inner membrane. Functionally, component of the ubiquinol-cytochrome c reductase complex (complex III or cytochrome b-c1 complex) that is part of the mitochondrial respiratory chain. The b-c1 complex mediates electron transfer from ubiquinol to cytochrome c. Contributes to the generation of a proton gradient across the mitochondrial membrane that is then used for ATP synthesis. The sequence is that of Cytochrome b (MT-CYB) from Microtus subterraneus (European pine vole).